The following is a 414-amino-acid chain: Serine hydroxymethyltransferase (414 aa).

Residues L121 and 125–127 contribute to the (6S)-5,6,7,8-tetrahydrofolate site; that span reads GHL. K230 carries the post-translational modification N6-(pyridoxal phosphate)lysine.

It belongs to the SHMT family. In terms of assembly, homodimer. It depends on pyridoxal 5'-phosphate as a cofactor.

The protein resides in the cytoplasm. It carries out the reaction (6R)-5,10-methylene-5,6,7,8-tetrahydrofolate + glycine + H2O = (6S)-5,6,7,8-tetrahydrofolate + L-serine. It functions in the pathway one-carbon metabolism; tetrahydrofolate interconversion. The protein operates within amino-acid biosynthesis; glycine biosynthesis; glycine from L-serine: step 1/1. In terms of biological role, catalyzes the reversible interconversion of serine and glycine with tetrahydrofolate (THF) serving as the one-carbon carrier. This reaction serves as the major source of one-carbon groups required for the biosynthesis of purines, thymidylate, methionine, and other important biomolecules. Also exhibits THF-independent aldolase activity toward beta-hydroxyamino acids, producing glycine and aldehydes, via a retro-aldol mechanism. This chain is Serine hydroxymethyltransferase, found in Acidithiobacillus ferrooxidans (strain ATCC 23270 / DSM 14882 / CIP 104768 / NCIMB 8455) (Ferrobacillus ferrooxidans (strain ATCC 23270)).